Reading from the N-terminus, the 503-residue chain is Apolipoprotein N-acyltransferase (503 aa).

Helical transmembrane passes span 13–32, 34–54, 63–83, 102–122, 124–144, 173–193, and 203–223; these read RWRGLVSLFLSVLSGFLTAL, MPGFLSGALIWFSLIPLLYAV, AFLSFVYFFTHVLISFFWVLP, IVVFVLMGIIEAVPFLGFGFL, YFAPQSIVLKTLYLASVYTIF, IVSITGTLGLVFLIVSLNVLF, and LLIFPVIFFVYLLNSSVVHLL. In terms of domain architecture, CN hydrolase spans 231–460; that stretch reads FKVVALQPNV…RLAGEFHIKA (230 aa). E273 (proton acceptor) is an active-site residue. K321 is an active-site residue. C371 serves as the catalytic Nucleophile. A helical transmembrane segment spans residues 468–488; sequence VRYGDWFFYLSVILAVVSVFI.

Belongs to the CN hydrolase family. Apolipoprotein N-acyltransferase subfamily.

The protein resides in the cell inner membrane. The enzyme catalyses N-terminal S-1,2-diacyl-sn-glyceryl-L-cysteinyl-[lipoprotein] + a glycerophospholipid = N-acyl-S-1,2-diacyl-sn-glyceryl-L-cysteinyl-[lipoprotein] + a 2-acyl-sn-glycero-3-phospholipid + H(+). Its pathway is protein modification; lipoprotein biosynthesis (N-acyl transfer). In terms of biological role, catalyzes the phospholipid dependent N-acylation of the N-terminal cysteine of apolipoprotein, the last step in lipoprotein maturation. The chain is Apolipoprotein N-acyltransferase from Thermotoga maritima (strain ATCC 43589 / DSM 3109 / JCM 10099 / NBRC 100826 / MSB8).